The sequence spans 72 residues: Translation initiation factor IF-1 (72 aa).

One can recognise an S1-like domain in the interval 1-72 (MSKDDCIEFE…TKGRIIYRMK (72 aa)).

This sequence belongs to the IF-1 family. As to quaternary structure, component of the 30S ribosomal translation pre-initiation complex which assembles on the 30S ribosome in the order IF-2 and IF-3, IF-1 and N-formylmethionyl-tRNA(fMet); mRNA recruitment can occur at any time during PIC assembly.

The protein localises to the cytoplasm. In terms of biological role, one of the essential components for the initiation of protein synthesis. Stabilizes the binding of IF-2 and IF-3 on the 30S subunit to which N-formylmethionyl-tRNA(fMet) subsequently binds. Helps modulate mRNA selection, yielding the 30S pre-initiation complex (PIC). Upon addition of the 50S ribosomal subunit IF-1, IF-2 and IF-3 are released leaving the mature 70S translation initiation complex. This is Translation initiation factor IF-1 from Xylella fastidiosa (strain 9a5c).